A 249-amino-acid polypeptide reads, in one-letter code: UPF0696 protein C11orf68 homolog (249 aa).

Belongs to the UPF0696 family.

This is UPF0696 protein C11orf68 homolog from Danio rerio (Zebrafish).